Consider the following 101-residue polypeptide: MAKNSMKAREAKRTKLVAQFAEKRTALKAIISDVNTSEDDRWDAVLKLQALPRDSSPVRQRNRCNITGRPHGFLRKFGMSRIKVREAAMRGEIPGLKKASW.

The protein belongs to the universal ribosomal protein uS14 family. In terms of assembly, part of the 30S ribosomal subunit. Contacts proteins S3 and S10.

Functionally, binds 16S rRNA, required for the assembly of 30S particles and may also be responsible for determining the conformation of the 16S rRNA at the A site. In Pseudoalteromonas translucida (strain TAC 125), this protein is Small ribosomal subunit protein uS14.